The following is a 378-amino-acid chain: Ribosomal RNA large subunit methyltransferase G (378 aa).

This sequence belongs to the methyltransferase superfamily. RlmG family.

The protein localises to the cytoplasm. It catalyses the reaction guanosine(1835) in 23S rRNA + S-adenosyl-L-methionine = N(2)-methylguanosine(1835) in 23S rRNA + S-adenosyl-L-homocysteine + H(+). In terms of biological role, specifically methylates the guanine in position 1835 (m2G1835) of 23S rRNA. The chain is Ribosomal RNA large subunit methyltransferase G from Salmonella heidelberg (strain SL476).